The sequence spans 264 residues: E3 ubiquitin-protein ligase MARCHF8 (264 aa).

A disordered region spans residues Leu15–Pro47. The segment covering Gly16–Pro47 has biased composition (polar residues). The RING-CH-type zinc-finger motif lies at Val45–Glu106. Zn(2+)-binding residues include Cys53, Cys56, Cys70, Cys72, His80, Cys83, Cys96, and Cys99. 2 consecutive transmembrane segments (helical) span residues Cys130–Ile150 and Phe170–Val190.

It is found in the cytoplasmic vesicle membrane. The protein resides in the lysosome membrane. Its subcellular location is the early endosome membrane. It catalyses the reaction S-ubiquitinyl-[E2 ubiquitin-conjugating enzyme]-L-cysteine + [acceptor protein]-L-lysine = [E2 ubiquitin-conjugating enzyme]-L-cysteine + N(6)-ubiquitinyl-[acceptor protein]-L-lysine.. The protein operates within protein modification; protein ubiquitination. Its function is as follows. E3 ubiquitin-protein ligase that mediates ubiquitination of cd86 and MHC class II proteins, such as hla-dr alpha and beta, and promotes their subsequent endocytosis and sorting to lysosomes via multivesicular bodies. This Xenopus laevis (African clawed frog) protein is E3 ubiquitin-protein ligase MARCHF8 (marchf8).